Reading from the N-terminus, the 295-residue chain is Elongation factor Ts (295 aa).

An involved in Mg(2+) ion dislocation from EF-Tu region spans residues 79-82 (TDFV).

It belongs to the EF-Ts family.

It is found in the cytoplasm. Its function is as follows. Associates with the EF-Tu.GDP complex and induces the exchange of GDP to GTP. It remains bound to the aminoacyl-tRNA.EF-Tu.GTP complex up to the GTP hydrolysis stage on the ribosome. The sequence is that of Elongation factor Ts from Mycoplasma mycoides subsp. mycoides SC (strain CCUG 32753 / NCTC 10114 / PG1).